The primary structure comprises 907 residues: Whirlin (907 aa).

The PDZ 1 domain occupies 140 to 223 (LVSLRRAKAH…LVLSVYSAGR (84 aa)). A disordered region spans residues 243 to 264 (SISPPSGLPQPHGGALRQQEGD). In terms of domain architecture, PDZ 2 spans 279 to 361 (KVNLVLGDGR…LILTVKDVGR (83 aa)). Disordered regions lie at residues 502-540 (SMKA…TVSS), 565-663 (SVDD…SSKR), 684-717 (QSPP…QTGT), and 742-815 (PQTR…PTST). Low complexity predominate over residues 521-540 (SYSDTGSSTGSHGTSTTVSS). Over residues 609 to 626 (PPSSMPSCSGTVFSAPQN) the composition is skewed to polar residues. The segment covering 628–642 (SPPAGTAPTPGTSSA) has biased composition (low complexity). Ser-685 carries the post-translational modification Phosphoserine. A compositionally biased stretch (polar residues) spans 743–762 (QTRTASTLSQLSDSGQTLSE). Residues 789-800 (SSKELPRNERPT) show a composition bias toward basic and acidic residues. A PDZ 3 domain is found at 816-899 (LVRVKKSAAT…TKDRDYIDFL (84 aa)).

In terms of assembly, forms homooligomers. Interacts (via C-terminal PDZ domain) with MYO15A; this interaction is necessary for localization of WHRN to stereocilia tips. Interacts (via C-terminal PDZ domain) with MPP1/p55. Interacts with LRRC4C/NGL1. Interacts with MYO7A. Interacts with RPGR. Interacts with EPS8. Interacts with CASK. Interacts with CIB2. Component of USH2 complex, composed of ADGRV1, PDZD7, USH2A and WHRN. Interacts (via PDZ domains) with PDZD7; the interaction is direct. Interacts (via N-terminal PDZ domain) with USH2A (via cytoplasmic region). Interacts with ADGRV1/MASS1 (via cytoplasmic region).

It is found in the cytoplasm. The protein localises to the cell projection. Its subcellular location is the stereocilium. It localises to the growth cone. The protein resides in the photoreceptor inner segment. It is found in the synapse. Functionally, involved in hearing and vision as member of the USH2 complex. Necessary for elongation and maintenance of inner and outer hair cell stereocilia in the organ of Corti in the inner ear. Involved in the maintenance of the hair bundle ankle region, which connects stereocilia in cochlear hair cells of the inner ear. In retina photoreceptors, required for the maintenance of periciliary membrane complex that seems to play a role in regulating intracellular protein transport. The protein is Whirlin of Homo sapiens (Human).